We begin with the raw amino-acid sequence, 147 residues long: MRTYTPKPGDINRQWHVIDATDVVLGRLASQTATLLRGKHKPTFAPHMDMGDFVIIINAEKVALTGAKLEQKRAYRHSGYPGGLSSVNYAELLEKNPVRAVEKAIKGMLPKTSLAAQQLSKLKVYRGAEHPHAAQQPKTFEITQVAQ.

This sequence belongs to the universal ribosomal protein uL13 family. As to quaternary structure, part of the 50S ribosomal subunit.

This protein is one of the early assembly proteins of the 50S ribosomal subunit, although it is not seen to bind rRNA by itself. It is important during the early stages of 50S assembly. The sequence is that of Large ribosomal subunit protein uL13 from Renibacterium salmoninarum (strain ATCC 33209 / DSM 20767 / JCM 11484 / NBRC 15589 / NCIMB 2235).